The following is a 61-amino-acid chain: Overexpressed in colon carcinoma 1 protein homolog (61 aa).

Polar residues predominate over residues 1–13 (MGCGNSTAASTTP). Positions 1–61 (MGCGNSTAAS…AGQTASTHKE (61 aa)) are disordered. The segment covering 18 to 34 (SAKDVQDDSSMDEEKRR) has biased composition (basic and acidic residues). Over residues 48–61 (TNETAGQTASTHKE) the composition is skewed to polar residues.

This sequence belongs to the OCC1 family.

The sequence is that of Overexpressed in colon carcinoma 1 protein homolog (si:dkey-261e22.4) from Danio rerio (Zebrafish).